Consider the following 435-residue polypeptide: Gamma-glutamyl phosphate reductase (435 aa).

The protein belongs to the gamma-glutamyl phosphate reductase family.

It is found in the cytoplasm. The enzyme catalyses L-glutamate 5-semialdehyde + phosphate + NADP(+) = L-glutamyl 5-phosphate + NADPH + H(+). The protein operates within amino-acid biosynthesis; L-proline biosynthesis; L-glutamate 5-semialdehyde from L-glutamate: step 2/2. Its function is as follows. Catalyzes the NADPH-dependent reduction of L-glutamate 5-phosphate into L-glutamate 5-semialdehyde and phosphate. The product spontaneously undergoes cyclization to form 1-pyrroline-5-carboxylate. This is Gamma-glutamyl phosphate reductase from Nostoc punctiforme (strain ATCC 29133 / PCC 73102).